The primary structure comprises 158 residues: Transcriptional repressor NrdR (158 aa).

A zinc finger spans residues 3-34 (CPYCGYPDSKVIDSRPTDDNTSIRRRRECLKC). The region spanning 49–139 (ILVIKKDNRR…VYRQFKDINT (91 aa)) is the ATP-cone domain.

The protein belongs to the NrdR family. Requires Zn(2+) as cofactor.

In terms of biological role, negatively regulates transcription of bacterial ribonucleotide reductase nrd genes and operons by binding to NrdR-boxes. The sequence is that of Transcriptional repressor NrdR from Thermoanaerobacter sp. (strain X514).